The following is a 551-amino-acid chain: Cytosolic Fe-S cluster assembly factor NAR1 (551 aa).

[4Fe-4S] cluster-binding residues include Cys20, Cys57, Cys60, Cys63, Cys178, and Cys242. Residues 395-435 are disordered; it reads DPSGHKKRSVRRVAALRSRGRKDSSSEDSTGTPSAISNALG. Residues 421 to 431 show a composition bias toward polar residues; it reads EDSTGTPSAIS. Cys451 lines the [4Fe-4S] cluster pocket.

It belongs to the NARF family.

Component of the cytosolic Fe/S protein assembly machinery. Required for maturation of extramitochondrial Fe/S proteins. May play a role in the transfer of pre-assembled Fe/S clusters to target apoproteins. The sequence is that of Cytosolic Fe-S cluster assembly factor NAR1 (NAR1) from Candida glabrata (strain ATCC 2001 / BCRC 20586 / JCM 3761 / NBRC 0622 / NRRL Y-65 / CBS 138) (Yeast).